The chain runs to 117 residues: Large ribosomal subunit protein bL20 (117 aa).

It belongs to the bacterial ribosomal protein bL20 family.

Its function is as follows. Binds directly to 23S ribosomal RNA and is necessary for the in vitro assembly process of the 50S ribosomal subunit. It is not involved in the protein synthesizing functions of that subunit. The sequence is that of Large ribosomal subunit protein bL20 from Rickettsia massiliae (strain Mtu5).